The chain runs to 234 residues: Leucyl/phenylalanyl-tRNA--protein transferase (234 aa).

Belongs to the L/F-transferase family.

Its subcellular location is the cytoplasm. It catalyses the reaction N-terminal L-lysyl-[protein] + L-leucyl-tRNA(Leu) = N-terminal L-leucyl-L-lysyl-[protein] + tRNA(Leu) + H(+). The enzyme catalyses N-terminal L-arginyl-[protein] + L-leucyl-tRNA(Leu) = N-terminal L-leucyl-L-arginyl-[protein] + tRNA(Leu) + H(+). The catalysed reaction is L-phenylalanyl-tRNA(Phe) + an N-terminal L-alpha-aminoacyl-[protein] = an N-terminal L-phenylalanyl-L-alpha-aminoacyl-[protein] + tRNA(Phe). Its function is as follows. Functions in the N-end rule pathway of protein degradation where it conjugates Leu, Phe and, less efficiently, Met from aminoacyl-tRNAs to the N-termini of proteins containing an N-terminal arginine or lysine. The sequence is that of Leucyl/phenylalanyl-tRNA--protein transferase from Escherichia coli O7:K1 (strain IAI39 / ExPEC).